The primary structure comprises 257 residues: Putative B3 domain-containing protein At2g27410 (257 aa).

The tract at residues 5–50 is disordered; the sequence is ARTTKINHFRGTSTTQNPNRGLEPSPSSYVTRRSKEKRPINVEKRS. Residues 8–35 are compositionally biased toward polar residues; it reads TKINHFRGTSTTQNPNRGLEPSPSSYVT. The TF-B3 DNA-binding region spans 115–209; it reads TPDFLTEDET…KLCFALTPKN (95 aa). The tract at residues 212-257 is disordered; that stretch reads RGNSLPGGDGASTSGESGQVPLPIPPARYSSNSGQGCSGESSSSSS. Low complexity predominate over residues 241–257; the sequence is SSNSGQGCSGESSSSSS.

Its subcellular location is the nucleus. This is Putative B3 domain-containing protein At2g27410 from Arabidopsis thaliana (Mouse-ear cress).